A 323-amino-acid chain; its full sequence is Ubiquinone biosynthesis protein COQ4, mitochondrial (323 aa).

Positions 203, 204, 207, and 219 each coordinate Zn(2+).

The protein belongs to the COQ4 family. As to quaternary structure, component of a multi-subunit COQ enzyme complex, composed of at least COQ3, COQ4, COQ5, COQ6, COQ7 and COQ9. It depends on Zn(2+) as a cofactor.

It localises to the mitochondrion inner membrane. It carries out the reaction a 4-hydroxy-3-methoxy-5-(all-trans-polyprenyl)benzoate + H(+) = a 2-methoxy-6-(all-trans-polyprenyl)phenol + CO2. It functions in the pathway cofactor biosynthesis; ubiquinone biosynthesis. In terms of biological role, lyase that catalyzes the C1-decarboxylation of 4-hydroxy-3-methoxy-5-(all-trans-polyprenyl)benzoic acid into 2-methoxy-6-(all-trans-polyprenyl)phenol during ubiquinone biosynthesis. The protein is Ubiquinone biosynthesis protein COQ4, mitochondrial of Eremothecium gossypii (strain ATCC 10895 / CBS 109.51 / FGSC 9923 / NRRL Y-1056) (Yeast).